The primary structure comprises 1136 residues: Nucleoporin nup120 (1136 aa).

Component of the npc107-120 complex which consists of nup85, nup107, nup120, nup131, nup132 and seh1. Interacts with nup107.

It is found in the nucleus. Its function is as follows. Functions as a component of the nuclear pore complex (NPC). NPC components, collectively referred to as nucleoporins (NUPs), can play the role of both NPC structural components and of docking or interaction partners for transiently associated nuclear transport factors. Active directional transport is assured by both, a Phe-Gly (FG) repeat affinity gradient for these transport factors across the NPC and a transport cofactor concentration gradient across the nuclear envelope. In Schizosaccharomyces pombe (strain 972 / ATCC 24843) (Fission yeast), this protein is Nucleoporin nup120 (nup120).